The sequence spans 284 residues: T-cell leukemia homeobox protein 2 (284 aa).

Disordered stretches follow at residues 1 to 50 (MEPG…NGAF), 78 to 106 (GGVI…GPSG), and 139 to 166 (FSGT…SFSR). Positions 30 to 50 (TPGGGLGLGRGGQGHGENGAF) are enriched in gly residues. Residues 87–96 (RPLPVPPPAG) show a composition bias toward pro residues. The segment at residues 157-216 (RKKPRTSFSRSQVLELERRFLRQKYLASAERAALAKALRMTDAQVKTWFQNRRTKWRRQT) is a DNA-binding region (homeobox).

Its subcellular location is the nucleus. Its function is as follows. Transcription activator that binds DNA elements with the consensus sequence 5'-CGGTAATTGG-3'. Binds DNA via its homeobox. Required for normal cell death of enteric neurons in the gastrointestinal tract. Required for normal development of the enteric nervous system, and for proper development of normal motility of the gastrointestinal tract. The chain is T-cell leukemia homeobox protein 2 (TLX2) from Homo sapiens (Human).